We begin with the raw amino-acid sequence, 622 residues long: MSLDISQFPVLAQANTPNELRQLPQALLPQLADELREFLLKSVGMSSGHFASGLGTVELTVALHYVYNTPFDRLIWDVGHQAYPHKILTGRRDRMHTIRQKNGLHPFPWREESEYDTFSVGHSGTSISAALAMAVAAEKEQAGRKVVAVIGDGAMTGGMVFEAMNHAGDLHNDMLMVLNDNEMSISENVGALNNHLAQLMSGRFYTTIRESSKKVLKGMPVIKEMAKRTEEHLKGMVVPGTLFEELGFNYIGPIDGHDVDALVETLRNMRNLKGPQVLHIMTKKGRGYEPAEKDPIGWHAVPKFDPSLFKKPATKPGLPTFSQVFGKWLCDIAEQDEKVLGITPAMREGSGMVEFSQRFPKQYFDAAIAEQHAVTLGAGFACEGYKPVVAIYSTFLQRGYDQLIHDVALQRLPVLFAIDRGGIVGADGPTHQGAFDLSFMRCIPNMVIMAPSDENECRQMLYTGYCYDAGPSAVRYPRGSATGATQVEAMTALPIGKGVIKRLGKRIALLNFGTTLAAALTAAESLDATVVDMRFVKPLDVDLVKEMAQTHDVLVTVEENAIMGGAGSGVLELLQQLKMPKPVLQIGLPDEFIKHGSPDEVIHDLQLDAEGMLAQINAYLAN.

Thiamine diphosphate contacts are provided by residues histidine 80 and 121–123 (GHS). Aspartate 152 contacts Mg(2+). Residues 153–154 (GA), asparagine 181, tyrosine 288, and glutamate 370 contribute to the thiamine diphosphate site. Asparagine 181 contacts Mg(2+).

This sequence belongs to the transketolase family. DXPS subfamily. Homodimer. Mg(2+) is required as a cofactor. Requires thiamine diphosphate as cofactor.

It carries out the reaction D-glyceraldehyde 3-phosphate + pyruvate + H(+) = 1-deoxy-D-xylulose 5-phosphate + CO2. It participates in metabolic intermediate biosynthesis; 1-deoxy-D-xylulose 5-phosphate biosynthesis; 1-deoxy-D-xylulose 5-phosphate from D-glyceraldehyde 3-phosphate and pyruvate: step 1/1. In terms of biological role, catalyzes the acyloin condensation reaction between C atoms 2 and 3 of pyruvate and glyceraldehyde 3-phosphate to yield 1-deoxy-D-xylulose-5-phosphate (DXP). This is 1-deoxy-D-xylulose-5-phosphate synthase from Shewanella oneidensis (strain ATCC 700550 / JCM 31522 / CIP 106686 / LMG 19005 / NCIMB 14063 / MR-1).